A 103-amino-acid chain; its full sequence is Conantokin R1-A (103 aa).

Positions 1-21 (MQLYTYLYLLVPLVTFHLILG) are cleaved as a signal peptide. Positions 22–79 (TGTLDHGGALTERRSTDATALKPEPVLQKSAARSTDDNGKDRLTQMKRILKKRGNNPR) are excised as a propeptide. Residues 34–83 (RRSTDATALKPEPVLQKSAARSTDDNGKDRLTQMKRILKKRGNNPRADEE) are disordered. Residues 55–65 (STDDNGKDRLT) show a composition bias toward basic and acidic residues. 4-carboxyglutamate occurs at positions 82, 83, and 89.

The protein belongs to the conotoxin B superfamily. Ca(2+) serves as cofactor. Requires Mg(2+) as cofactor. Expressed by the venom duct.

The protein localises to the secreted. Its function is as follows. Conantokins inhibit N-methyl-D-aspartate (NMDA) receptors. This toxin has the highest potency for the NR2B/GRIN2B subunit (IC(50)=0.11 uM), followed by NR2D/GRIN2D (IC(50)=0.48 uM), NR2A/GRIN2A (IC(50)=2.1 uM), and NR2C/GRIN2C (IC(50)=6.1 uM) subunits when tested on rat receptors. The chain is Conantokin R1-A from Conus rolani (Cone snail).